A 76-amino-acid polypeptide reads, in one-letter code: Acyl carrier protein (76 aa).

The Carrier domain occupies 1–76 (MDTFESVKAV…DVVAYIEANK (76 aa)). S36 carries the O-(pantetheine 4'-phosphoryl)serine modification.

It belongs to the acyl carrier protein (ACP) family. Post-translationally, 4'-phosphopantetheine is transferred from CoA to a specific serine of apo-ACP by AcpS. This modification is essential for activity because fatty acids are bound in thioester linkage to the sulfhydryl of the prosthetic group.

It localises to the cytoplasm. The protein operates within lipid metabolism; fatty acid biosynthesis. Functionally, carrier of the growing fatty acid chain in fatty acid biosynthesis. In Helicobacter hepaticus (strain ATCC 51449 / 3B1), this protein is Acyl carrier protein.